A 239-amino-acid chain; its full sequence is Orotidine 5'-phosphate decarboxylase (239 aa).

Substrate-binding positions include Asp15, Lys37, 64-73 (DLKFHDIPNT), Thr126, Arg187, Gln196, Gly216, and Arg217. Lys66 (proton donor) is an active-site residue.

It belongs to the OMP decarboxylase family. Type 1 subfamily. As to quaternary structure, homodimer.

The enzyme catalyses orotidine 5'-phosphate + H(+) = UMP + CO2. Its pathway is pyrimidine metabolism; UMP biosynthesis via de novo pathway; UMP from orotate: step 2/2. Catalyzes the decarboxylation of orotidine 5'-monophosphate (OMP) to uridine 5'-monophosphate (UMP). The sequence is that of Orotidine 5'-phosphate decarboxylase from Geobacter sulfurreducens (strain ATCC 51573 / DSM 12127 / PCA).